A 356-amino-acid chain; its full sequence is Cyanide hydratase (356 aa).

One can recognise a CN hydrolase domain in the interval 6–285 (YKAAAVTSEP…DGLLFVDIDL (280 aa)). Catalysis depends on Glu46, which acts as the Proton acceptor. Lys128 is a catalytic residue. The active-site Nucleophile is Cys163.

Belongs to the carbon-nitrogen hydrolase superfamily. Nitrilase family. Oligomer of dimers, forming left-handed helical fibers.

The enzyme catalyses formamide = hydrogen cyanide + H2O. Its function is as follows. Catalyzes the hydration of cyanide to formamide. Degradation of cyanide may be important for plant pathogenic fungi in infection of cyanogenic plants. In Leptosphaeria maculans (Blackleg fungus), this protein is Cyanide hydratase.